The following is a 305-amino-acid chain: Sulfate adenylyltransferase subunit 2 (305 aa).

This sequence belongs to the PAPS reductase family. CysD subfamily. In terms of assembly, heterodimer composed of CysD, the smaller subunit, and CysN.

The enzyme catalyses sulfate + ATP + H(+) = adenosine 5'-phosphosulfate + diphosphate. The protein operates within sulfur metabolism; hydrogen sulfide biosynthesis; sulfite from sulfate: step 1/3. In terms of biological role, with CysN forms the ATP sulfurylase (ATPS) that catalyzes the adenylation of sulfate producing adenosine 5'-phosphosulfate (APS) and diphosphate, the first enzymatic step in sulfur assimilation pathway. APS synthesis involves the formation of a high-energy phosphoric-sulfuric acid anhydride bond driven by GTP hydrolysis by CysN coupled to ATP hydrolysis by CysD. This chain is Sulfate adenylyltransferase subunit 2, found in Pseudomonas savastanoi pv. phaseolicola (strain 1448A / Race 6) (Pseudomonas syringae pv. phaseolicola (strain 1448A / Race 6)).